The following is a 257-amino-acid chain: Acetylglutamate kinase (257 aa).

Residues 43–44 (GG), Arg-65, and Asn-157 each bind substrate. Residues 180-185 (DISSIL) and 208-210 (IIT) contribute to the ATP site.

This sequence belongs to the acetylglutamate kinase family. ArgB subfamily. In terms of assembly, homodimer.

The protein resides in the cytoplasm. It catalyses the reaction N-acetyl-L-glutamate + ATP = N-acetyl-L-glutamyl 5-phosphate + ADP. It participates in amino-acid biosynthesis; L-arginine biosynthesis; N(2)-acetyl-L-ornithine from L-glutamate: step 2/4. Functionally, catalyzes the ATP-dependent phosphorylation of N-acetyl-L-glutamate. This chain is Acetylglutamate kinase, found in Buchnera aphidicola subsp. Acyrthosiphon pisum (strain 5A).